Here is a 212-residue protein sequence, read N- to C-terminus: Pyridoxine/pyridoxamine 5'-phosphate oxidase (212 aa).

Residues 8 to 11 and K66 contribute to the substrate site; that span reads RREY. Residues 61–66, 76–77, R82, K83, and Q105 contribute to the FMN site; these read RIVLLK and FT. Substrate is bound by residues Y123, R127, and S131. Residues 140-141 and W185 contribute to the FMN site; that span reads QS. 191 to 193 is a binding site for substrate; it reads RLH. R195 is a binding site for FMN.

This sequence belongs to the pyridoxamine 5'-phosphate oxidase family. In terms of assembly, homodimer. It depends on FMN as a cofactor.

It catalyses the reaction pyridoxamine 5'-phosphate + O2 + H2O = pyridoxal 5'-phosphate + H2O2 + NH4(+). The catalysed reaction is pyridoxine 5'-phosphate + O2 = pyridoxal 5'-phosphate + H2O2. It functions in the pathway cofactor metabolism; pyridoxal 5'-phosphate salvage; pyridoxal 5'-phosphate from pyridoxamine 5'-phosphate: step 1/1. It participates in cofactor metabolism; pyridoxal 5'-phosphate salvage; pyridoxal 5'-phosphate from pyridoxine 5'-phosphate: step 1/1. In terms of biological role, catalyzes the oxidation of either pyridoxine 5'-phosphate (PNP) or pyridoxamine 5'-phosphate (PMP) into pyridoxal 5'-phosphate (PLP). This chain is Pyridoxine/pyridoxamine 5'-phosphate oxidase, found in Shewanella putrefaciens (strain CN-32 / ATCC BAA-453).